We begin with the raw amino-acid sequence, 320 residues long: Glutaminase (320 aa).

Substrate contacts are provided by serine 70, asparagine 121, glutamate 165, asparagine 172, tyrosine 196, tyrosine 248, and valine 266.

The protein belongs to the glutaminase family. In terms of assembly, homotetramer.

It carries out the reaction L-glutamine + H2O = L-glutamate + NH4(+). The chain is Glutaminase from Mycobacterium marinum (strain ATCC BAA-535 / M).